We begin with the raw amino-acid sequence, 95 residues long: Small ribosomal subunit protein uS19 (95 aa).

It belongs to the universal ribosomal protein uS19 family.

Functionally, protein S19 forms a complex with S13 that binds strongly to the 16S ribosomal RNA. This is Small ribosomal subunit protein uS19 from Coxiella burnetii (strain CbuK_Q154) (Coxiella burnetii (strain Q154)).